Here is a 299-residue protein sequence, read N- to C-terminus: Ciliary microtubule inner protein 2B (299 aa).

It belongs to the CIMIP2 family. As to expression, expressed in airway epithelial cells.

It is found in the cytoplasm. The protein resides in the cytoskeleton. The protein localises to the cilium axoneme. In terms of biological role, microtubule inner protein (MIP) part of the dynein-decorated doublet microtubules (DMTs) in cilia axoneme, which is required for motile cilia beating. This is Ciliary microtubule inner protein 2B (cimip2b) from Danio rerio (Zebrafish).